The following is a 59-amino-acid chain: MAFDKKLLEIVACPVCKGKLEYDKANQQLICKADRLAYAINEGIPVLLENKATPWNEEA.

It belongs to the UPF0434 family.

The polypeptide is UPF0434 protein Shew_1640 (Shewanella loihica (strain ATCC BAA-1088 / PV-4)).